The chain runs to 307 residues: Aspartate carbamoyltransferase catalytic subunit (307 aa).

The carbamoyl phosphate site is built by arginine 58 and threonine 59. Lysine 86 serves as a coordination point for L-aspartate. 3 residues coordinate carbamoyl phosphate: arginine 108, histidine 136, and glutamine 139. Positions 169 and 223 each coordinate L-aspartate. Residues glycine 264 and proline 265 each contribute to the carbamoyl phosphate site.

This sequence belongs to the aspartate/ornithine carbamoyltransferase superfamily. ATCase family. Heterododecamer (2C3:3R2) of six catalytic PyrB chains organized as two trimers (C3), and six regulatory PyrI chains organized as three dimers (R2).

The catalysed reaction is carbamoyl phosphate + L-aspartate = N-carbamoyl-L-aspartate + phosphate + H(+). It participates in pyrimidine metabolism; UMP biosynthesis via de novo pathway; (S)-dihydroorotate from bicarbonate: step 2/3. Catalyzes the condensation of carbamoyl phosphate and aspartate to form carbamoyl aspartate and inorganic phosphate, the committed step in the de novo pyrimidine nucleotide biosynthesis pathway. In Moorella thermoacetica (strain ATCC 39073 / JCM 9320), this protein is Aspartate carbamoyltransferase catalytic subunit.